Reading from the N-terminus, the 1693-residue chain is Putative stoned B-like protein (1693 aa).

Positions 1–12 (MSWRDRDFDPHG) are enriched in basic and acidic residues. Disordered stretches follow at residues 1–54 (MSWR…ELPA), 222–322 (NQIP…VEKS), 334–371 (TVEITSPDAPHQGAFHDNTPKEPKVVEEEEDDDLPTFS), 383–438 (KEMT…DPNA), 585–807 (GDYH…TSAA), 841–869 (KKMEKLQKKKLKQQGKKAATPTLEPDEED), and 899–1024 (PVKE…FVAD). The span at 26 to 39 (SSSERAASMRAMRS) shows a compositional bias: low complexity. Composition is skewed to basic and acidic residues over residues 279–301 (MEDKMEQAEEKARKEEKKEKEET) and 311–322 (TTEKHQNEVEKS). Acidic residues predominate over residues 360–371 (EEEEDDDLPTFS). Over residues 393–412 (ENVENEKQEDTHISEGHVEY) the composition is skewed to basic and acidic residues. Over residues 596–615 (DENSTSAISGYEQNGASTSL) the composition is skewed to polar residues. A compositionally biased stretch (low complexity) spans 632 to 643 (YYQGQEYQQEYY). The short motif at 684 to 686 (DPF) is the DPF 1 element. Residues 708–722 (SPTPEASSSTGTSAP) show a composition bias toward low complexity. The span at 745–760 (PPRPPPAARPPPPRPA) shows a compositional bias: pro residues. Polar residues predominate over residues 786-807 (KVSTAVKSTESTLKNLEETSAA). Residues 899–913 (PVKEIKKAPEIRRVD) are compositionally biased toward basic and acidic residues. 3 consecutive short sequence motifs (DPF) follow at residues 1006-1008 (DPF), 1024-1026 (DPF), and 1039-1041 (DPF). Residues 1062 to 1095 (ANAENEDDFYNGRQSPTLSTPTPEGGSPISQQRP) are disordered. Positions 1073–1095 (GRQSPTLSTPTPEGGSPISQQRP) are enriched in polar residues. An SHD domain is found at 1136–1283 (GWDLMVRHPI…KCKITRTAKP (148 aa)). Residues 1287 to 1606 (QDEVQIHCYD…AKYQYKVEID (320 aa)) enclose the MHD domain. Positions 1633–1693 (ELHQPTFNPS…IQIDMKNYGY (61 aa)) are disordered. Residues 1637–1651 (PTFNPSTQESDTQQG) show a composition bias toward polar residues.

This sequence belongs to the Stoned B family.

Its subcellular location is the cytoplasm. Potential adapter protein, which may be involved in endocytic vesicle recycling of synaptic vesicles. This is Putative stoned B-like protein (unc-41) from Caenorhabditis elegans.